A 790-amino-acid polypeptide reads, in one-letter code: cAMP and cAMP-inhibited cGMP 3',5'-cyclic phosphodiesterase 10A (790 aa).

3',5'-cyclic AMP-binding positions include 290–291 (RC), 334–335 (IA), Thr368, Gln387, and His519. One can recognise a PDEase domain in the interval 446–763 (TSEEWQGLMR…NQWEKVIRGE (318 aa)). The Proton donor role is filled by His519. A 3',5'-cyclic GMP-binding site is contributed by His519. Residues His523, His557, Asp558, and Asp668 each coordinate a divalent metal cation. Gln720 lines the 3',5'-cyclic AMP pocket. Gln720 contributes to the 3',5'-cyclic GMP binding site. Positions 768–790 (WISGPGPAPSKSTPEKLNVKVED) are disordered. The segment covering 780–790 (TPEKLNVKVED) has biased composition (basic and acidic residues).

It belongs to the cyclic nucleotide phosphodiesterase family. Homodimer. A divalent metal cation is required as a cofactor. Detected in striatum (at protein level). Detected in testis and brain.

It localises to the cytoplasm. It is found in the cytosol. The catalysed reaction is a nucleoside 3',5'-cyclic phosphate + H2O = a nucleoside 5'-phosphate + H(+). It catalyses the reaction 3',5'-cyclic AMP + H2O = AMP + H(+). It carries out the reaction 3',5'-cyclic GMP + H2O = GMP + H(+). Its pathway is purine metabolism; 3',5'-cyclic AMP degradation; AMP from 3',5'-cyclic AMP: step 1/1. It functions in the pathway purine metabolism; 3',5'-cyclic GMP degradation; GMP from 3',5'-cyclic GMP: step 1/1. Plays a role in signal transduction by regulating the intracellular concentration of cyclic nucleotides. Can hydrolyze both cAMP and cGMP, but has higher affinity for cAMP and is more efficient with cAMP as substrate. May play a critical role in regulating cAMP and cGMP levels in the striatum, a region of the brain that contributes to the control of movement and cognition. The polypeptide is cAMP and cAMP-inhibited cGMP 3',5'-cyclic phosphodiesterase 10A (Pde10a) (Mus musculus (Mouse)).